Here is a 302-residue protein sequence, read N- to C-terminus: Potassium/proton antiporter CemA (302 aa).

A run of 4 helical transmembrane segments spans residues 55–75 (VFVS…ITFL), 187–207 (FVSF…IIIL), 225–247 (FLLI…ELFL), and 262–282 (FIFL…KYWI).

Belongs to the CemA family.

It is found in the plastid. The protein localises to the chloroplast inner membrane. The catalysed reaction is K(+)(in) + H(+)(out) = K(+)(out) + H(+)(in). Contributes to K(+)/H(+) antiport activity by supporting proton efflux to control proton extrusion and homeostasis in chloroplasts in a light-dependent manner to modulate photosynthesis. Prevents excessive induction of non-photochemical quenching (NPQ) under continuous-light conditions. Indirectly promotes efficient inorganic carbon uptake into chloroplasts. The polypeptide is Potassium/proton antiporter CemA (Tupiella akineta (Green alga)).